The primary structure comprises 170 residues: ATP synthase subunit b, chloroplastic (170 aa).

The chain crosses the membrane as a helical span at residues I15–G35.

The protein belongs to the ATPase B chain family. F-type ATPases have 2 components, F(1) - the catalytic core - and F(0) - the membrane proton channel. F(1) has five subunits: alpha(3), beta(3), gamma(1), delta(1), epsilon(1). F(0) has four main subunits: a(1), b(1), b'(1) and c(10-14). The alpha and beta chains form an alternating ring which encloses part of the gamma chain. F(1) is attached to F(0) by a central stalk formed by the gamma and epsilon chains, while a peripheral stalk is formed by the delta, b and b' chains.

It is found in the plastid. The protein localises to the chloroplast thylakoid membrane. Its function is as follows. F(1)F(0) ATP synthase produces ATP from ADP in the presence of a proton or sodium gradient. F-type ATPases consist of two structural domains, F(1) containing the extramembraneous catalytic core and F(0) containing the membrane proton channel, linked together by a central stalk and a peripheral stalk. During catalysis, ATP synthesis in the catalytic domain of F(1) is coupled via a rotary mechanism of the central stalk subunits to proton translocation. In terms of biological role, component of the F(0) channel, it forms part of the peripheral stalk, linking F(1) to F(0). This Stigeoclonium helveticum (Green alga) protein is ATP synthase subunit b, chloroplastic.